Reading from the N-terminus, the 431-residue chain is Phosphoribosylamine--glycine ligase (431 aa).

The region spanning 108 to 315 (KDFLARHKIP…LVLLIEAALA (208 aa)) is the ATP-grasp domain. 134–195 (LREKGAPIVI…EEFLDGEEAS (62 aa)) contacts ATP. Positions 285 and 287 each coordinate Mg(2+).

It belongs to the GARS family. Requires Mg(2+) as cofactor. Mn(2+) serves as cofactor.

It carries out the reaction 5-phospho-beta-D-ribosylamine + glycine + ATP = N(1)-(5-phospho-beta-D-ribosyl)glycinamide + ADP + phosphate + H(+). It functions in the pathway purine metabolism; IMP biosynthesis via de novo pathway; N(1)-(5-phospho-D-ribosyl)glycinamide from 5-phospho-alpha-D-ribose 1-diphosphate: step 2/2. In Pseudomonas syringae pv. tomato (strain ATCC BAA-871 / DC3000), this protein is Phosphoribosylamine--glycine ligase.